The following is a 1034-amino-acid chain: MAALRASLLLSCALTAARAFNLDAERPAVYSGAEGSYFGFAVDFFAPDASSMFLLVGAPKANTSQSNVVEGGQVLQCNWNSNRNCQPIIFDSTGNRDFAPDDPLEFKSHQWFGASVRSKNDKILACAPLYHWRTETKQEREPVGTCYLFDGSKSVEYAPCRSTTIDADGQGFCQGGFSIDFTKGDRVLLGGPGSFYWQGQLISDRVAEILAKYDSKVYSTKYDDQLATRPASAAFDDSYLGYSVAVGDFSGDGIEDFVSGVPRAARTLGMVSIYNGKNMSSMYNFTGEQMAAYFGYSVATTDINGDDYTDLFIGAPLFMDRGSDGKLQEVGQVSICLQRASGGFQIAKLNGFEIFARFGSAIAPLGDLDQDGFNDIAVAAPYGGEDKRGLVYIYNGRATGLNAVPSRILEGQWAARTMPPSFGYSLKGATDVDKNGYPDLIVGAFGVDTAVLYRARPVIRVNAALEVNPTILNPENKACSLADVKVSCFKVKFCLKADGKGKLPNSLNFQVELLLDKLKQKGAIRRALFLHSKQPSHSKNMTITKGGKMNCEELDAFLRDESEFRDKLTPITIFMEYRLDYKTAVDATGLHPILNQFIPANMSRQAHILLDCGEDNICKPKLEVSVRSDQKKIYIGDDNPLTLIVTAENQGEGAYEAELFVIVPPQADFIGVVRNNEALARLSCAFKTENQTRMVVCDLGNPMKAGTKLLAGLRFSVHQQSEMDTSVKFDLQIRSSNLFDNLSPVAFYQVDLAISAAVEIRGVSSPDHIFLPIANWQPKENPETEDDIGPLVQHIYELRNNGPSAFSKVMMTLQWPYKYKNYTLLYIVQYDIDGPMNCTSDMEINPLKIKISAPKEDEKNETFSREDNRNHRISRRDLTAIEGDVQTLGCGNADCLKIVCQVGHLERGKSAILYLKSRLWTQTFMNKENQNHSYSLQSSASFNVIEFPYKNLSFEDIHNSTVVTTNITWGIQPQPMPVPVWVIILAVLAGLLLLAVLVLVMYRMGFFKRVRPPQEEQEREQLQPHENGEGTSEA.

Positions 1–19 are cleaved as a signal peptide; sequence MAALRASLLLSCALTAARA. Residues 20 to 978 lie on the Extracellular side of the membrane; the sequence is FNLDAERPAV…WGIQPQPMPV (959 aa). 7 FG-GAP repeats span residues 21–86, 97–158, 161–213, 225–279, 280–345, 346–403, and 407–470; these read NLDA…RNCQ, DFAP…VEYA, RSTT…LAKY, QLAT…GKNM, SSMY…GGFQ, IAKL…GLNA, and RILE…VNPT. N-linked (GlcNAc...) asparagine glycosylation is present at Asn62. 3 cysteine pairs are disulfide-bonded: Cys77-Cys85, Cys126-Cys146, and Cys160-Cys173. Ca(2+)-binding residues include Asp248, Asp252, Ile254, and Asp256. N-linked (GlcNAc...) asparagine glycosylation is found at Asn278 and Asn284. The Ca(2+) site is built by Asp302, Asn304, Asp306, Tyr308, Asp310, Asp367, Asp369, Asp371, Phe373, Asp375, Asp431, Asp433, Asn435, Tyr437, and Asp439. 2 cysteine pairs are disulfide-bonded: Cys479/Cys488 and Cys494/Cys551. N-linked (GlcNAc...) asparagine glycans are attached at residues Asn540 and Asn601. Cystine bridges form between Cys612–Cys618 and Cys684–Cys697. N-linked (GlcNAc...) asparagine glycosylation is found at Asn690, Asn821, Asn837, and Asn860. 2 disulfide bridges follow: Cys838-Cys900 and Cys890-Cys895. 4 N-linked (GlcNAc...) asparagine glycosylation sites follow: Asn931, Asn951, Asn959, and Asn966. A helical membrane pass occupies residues 979–1002; sequence PVWVIILAVLAGLLLLAVLVLVMY. The Cytoplasmic portion of the chain corresponds to 1003–1034; sequence RMGFFKRVRPPQEEQEREQLQPHENGEGTSEA. Positions 1005 to 1009 match the GFFKR motif motif; it reads GFFKR. Basic and acidic residues predominate over residues 1013 to 1028; the sequence is PQEEQEREQLQPHENG. The disordered stretch occupies residues 1013 to 1034; it reads PQEEQEREQLQPHENGEGTSEA.

Belongs to the integrin alpha chain family. Heterodimer of an alpha and a beta subunit. The alpha subunit is composed of a heavy and a light chain linked by a disulfide bond. Alpha-V (ITGAV) associates with either beta-1 (ITGB1), beta-3 (ITGB3), beta-5 (ITGB5), beta-6 (ITGB6) or beta-8 (ITGB8). Interacts with RAB25. Interacts with CIB1. Integrins ITGAV:ITGB3 and ITGAV:ITGB5 interact with FBLN5 (via N-terminus). ITGAV:ITGB3 and ITGAV:ITGB5 interact with CCN3. ITGAV:ITGB3 interacts with ADGRA2. ITGAV:ITGB3 interacts with FGF2; it is likely that FGF2 can simultaneously bind ITGAV:ITGB3 and FGF receptors. ITGAV:ITGB3 is found in a ternary complex with CX3CR1 and CX3CL1. ITGAV:ITGB3 is found in a ternary complex with NRG1 and ERBB3. ITGAV:ITGB3 is found in a ternary complex with FGF1 and FGFR1. ITGAV:ITGB3 is found in a ternary complex with IGF1 and IGF1R. ITGAV:ITGB3 interacts with IGF2. ITGAV:ITGB3 and ITGAV:ITGB6 interact with FBN1. ITGAV:ITGB3 interacts with CD9, CD81 and CD151 (via second extracellular domain). ITGAV:ITGB6 interacts with TGFB1.

It localises to the membrane. The protein resides in the cell junction. Its subcellular location is the focal adhesion. Functionally, the alpha-V (ITGAV) integrins are receptors for vitronectin, cytotactin, fibronectin, fibrinogen, laminin, matrix metalloproteinase-2, osteopontin, osteomodulin, prothrombin, thrombospondin, TGFB1 and vWF. They recognize the sequence R-G-D in a wide array of ligands. Alpha-V integrins may play a role in embryo implantation, angiogenesis and wound healing. ITGAV:ITGB3 binds to fractalkine (CX3CL1) and may act as its coreceptor in CX3CR1-dependent fractalkine signaling. ITGAV:ITGB3 binds to NRG1 (via EGF domain) and this binding is essential for NRG1-ERBB signaling. ITGAV:ITGB3 binds to FGF1 and this binding is essential for FGF1 signaling. ITGAV:ITGB3 binds to FGF2 and this binding is essential for FGF2 signaling. ITGAV:ITGB3 binds to IGF1 and this binding is essential for IGF1 signaling. ITGAV:ITGB3 binds to IGF2 and this binding is essential for IGF2 signaling. ITGAV:ITGB3 binds to IL1B and this binding is essential for IL1B signaling. ITGAV:ITGB3 binds to PLA2G2A via a site (site 2) which is distinct from the classical ligand-binding site (site 1) and this induces integrin conformational changes and enhanced ligand binding to site 1. ITGAV:ITGB3 and ITGAV:ITGB6 act as receptors for fibrillin-1 (FBN1) and mediate R-G-D-dependent cell adhesion to FBN1. Integrin alpha-V/beta-6 or alpha-V/beta-8 (ITGAV:ITGB6 or ITGAV:ITGB8) mediates R-G-D-dependent release of transforming growth factor beta-1 (TGF-beta-1) from regulatory Latency-associated peptide (LAP), thereby playing a key role in TGF-beta-1 activation. ITGAV:ITGB3 acts as a receptor for CD40LG. ITGAV:ITGB3 acts as a receptor for IBSP and promotes cell adhesion and migration to IBSP. In Gallus gallus (Chicken), this protein is Integrin alpha-V (ITGAV).